Here is a 620-residue protein sequence, read N- to C-terminus: Glutathione-regulated potassium-efflux system protein KefC (620 aa).

12 helical membrane-spanning segments follow: residues 4 to 24 (HTLI…PIAV), 26 to 46 (LGLG…PWGL), 54 to 74 (SILH…GLEL), 90 to 110 (GALQ…LLGL), 114 to 134 (VAEL…MQAM), 149 to 169 (FAVL…IPLL), 178 to 198 (MGAF…VVLL), 218 to 238 (VFSA…EEVG), 270 to 290 (GLLL…GTLI), 294 to 314 (LRIV…LWLI), 327 to 347 (WFAV…GAAQ), and 359 to 379 (SLTL…VILN). The 120-residue stretch at 399 to 518 (QPRVIIAGFG…AGVEKPERET (120 aa)) folds into the RCK N-terminal domain. Positions 597 to 620 (GWQGTEEGKHTGNMADEPETKPSS) are disordered.

Belongs to the monovalent cation:proton antiporter 2 (CPA2) transporter (TC 2.A.37) family. KefC subfamily. Homodimer. Interacts with the regulatory subunit KefF.

The protein localises to the cell inner membrane. Pore-forming subunit of a potassium efflux system that confers protection against electrophiles. Catalyzes K(+)/H(+) antiport. The protein is Glutathione-regulated potassium-efflux system protein KefC of Escherichia coli (strain SMS-3-5 / SECEC).